Reading from the N-terminus, the 230-residue chain is Geranylgeranylglyceryl phosphate synthase (230 aa).

Lys13 contacts sn-glycerol 1-phosphate. Asp15 and Thr41 together coordinate Mg(2+). Residues 161-166 (YIEYSG), Gly191, and 211-212 (GN) contribute to the sn-glycerol 1-phosphate site.

It belongs to the GGGP/HepGP synthase family. Group I subfamily. It depends on Mg(2+) as a cofactor.

The protein localises to the cytoplasm. It carries out the reaction sn-glycerol 1-phosphate + (2E,6E,10E)-geranylgeranyl diphosphate = sn-3-O-(geranylgeranyl)glycerol 1-phosphate + diphosphate. The protein operates within membrane lipid metabolism; glycerophospholipid metabolism. In terms of biological role, prenyltransferase that catalyzes the transfer of the geranylgeranyl moiety of geranylgeranyl diphosphate (GGPP) to the C3 hydroxyl of sn-glycerol-1-phosphate (G1P). This reaction is the first ether-bond-formation step in the biosynthesis of archaeal membrane lipids. The protein is Geranylgeranylglyceryl phosphate synthase of Methanoculleus marisnigri (strain ATCC 35101 / DSM 1498 / JR1).